We begin with the raw amino-acid sequence, 256 residues long: tRNA (guanine-N(7)-)-methyltransferase (256 aa).

Residues 1–25 (MVATGGQAQDQSQNQEPDVLNPTSA) form a disordered region. S-adenosyl-L-methionine contacts are provided by residues Gly-79, 102-103 (EI), 137-138 (NA), and Leu-157. Asp-160 is a catalytic residue. Residue 235-237 (SEE) participates in S-adenosyl-L-methionine binding.

This sequence belongs to the class I-like SAM-binding methyltransferase superfamily. TrmB family.

The protein resides in the nucleus. It carries out the reaction guanosine(46) in tRNA + S-adenosyl-L-methionine = N(7)-methylguanosine(46) in tRNA + S-adenosyl-L-homocysteine. Its pathway is tRNA modification; N(7)-methylguanine-tRNA biosynthesis. Catalyzes the formation of N(7)-methylguanine at position 46 (m7G46) in tRNA. This is tRNA (guanine-N(7)-)-methyltransferase from Drosophila simulans (Fruit fly).